A 645-amino-acid chain; its full sequence is Threonine--tRNA ligase (645 aa).

The region spanning 1–63 (MDQIKIKFPD…ESDGDIEIVT (63 aa)) is the TGS domain. The tract at residues 242–540 (DHRKIGKELE…LTEETKGAFP (299 aa)) is catalytic. Residues C336, H387, and H517 each contribute to the Zn(2+) site.

It belongs to the class-II aminoacyl-tRNA synthetase family. As to quaternary structure, homodimer. It depends on Zn(2+) as a cofactor.

The protein localises to the cytoplasm. It carries out the reaction tRNA(Thr) + L-threonine + ATP = L-threonyl-tRNA(Thr) + AMP + diphosphate + H(+). In terms of biological role, catalyzes the attachment of threonine to tRNA(Thr) in a two-step reaction: L-threonine is first activated by ATP to form Thr-AMP and then transferred to the acceptor end of tRNA(Thr). Also edits incorrectly charged L-seryl-tRNA(Thr). The protein is Threonine--tRNA ligase of Staphylococcus saprophyticus subsp. saprophyticus (strain ATCC 15305 / DSM 20229 / NCIMB 8711 / NCTC 7292 / S-41).